Reading from the N-terminus, the 304-residue chain is 4-diphosphocytidyl-2-C-methyl-D-erythritol kinase (304 aa).

K23 is a catalytic residue. 111–121 contacts ATP; it reads PIGGGLGGGSS. The active site involves D153.

This sequence belongs to the GHMP kinase family. IspE subfamily. In terms of assembly, homodimer.

It carries out the reaction 4-CDP-2-C-methyl-D-erythritol + ATP = 4-CDP-2-C-methyl-D-erythritol 2-phosphate + ADP + H(+). It participates in isoprenoid biosynthesis; isopentenyl diphosphate biosynthesis via DXP pathway; isopentenyl diphosphate from 1-deoxy-D-xylulose 5-phosphate: step 3/6. Catalyzes the phosphorylation of the position 2 hydroxy group of 4-diphosphocytidyl-2C-methyl-D-erythritol. This is 4-diphosphocytidyl-2-C-methyl-D-erythritol kinase from Wigglesworthia glossinidia brevipalpis.